Consider the following 480-residue polypeptide: Ribosomal RNA small subunit methyltransferase F (480 aa).

Residues alanine 125 to lysine 131, glutamate 149, aspartate 176, and aspartate 194 contribute to the S-adenosyl-L-methionine site. Cysteine 247 acts as the Nucleophile in catalysis.

It belongs to the class I-like SAM-binding methyltransferase superfamily. RsmB/NOP family.

It is found in the cytoplasm. It carries out the reaction cytidine(1407) in 16S rRNA + S-adenosyl-L-methionine = 5-methylcytidine(1407) in 16S rRNA + S-adenosyl-L-homocysteine + H(+). Functionally, specifically methylates the cytosine at position 1407 (m5C1407) of 16S rRNA. The polypeptide is Ribosomal RNA small subunit methyltransferase F (Enterobacter sp. (strain 638)).